A 190-amino-acid chain; its full sequence is Cilia- and flagella-associated protein 20 (190 aa).

Belongs to the CFAP20 family.

The protein resides in the cytoplasm. It is found in the cytoskeleton. It localises to the flagellum axoneme. Its subcellular location is the flagellum basal body. In terms of biological role, cilium- and flagellum-specific protein that plays a role in axonemal structure organization and motility. Involved in the control of flagellar beating in an asymmetric and planar waveform. Stabilizes outer doublet microtubules (DMTs) of the axoneme and may work as a scaffold for intratubular proteins, such as tektin and PACRG, to produce the beak structures in DMT1, 5 and 6. Not essential for flagellar assembly. The polypeptide is Cilia- and flagella-associated protein 20 (CFAP20) (Chlamydomonas reinhardtii (Chlamydomonas smithii)).